A 982-amino-acid polypeptide reads, in one-letter code: Zinc finger and BTB domain-containing protein 4 (982 aa).

One can recognise a BTB domain in the interval 30–131 (CDVTLIAGDT…IYSARLALPG (102 aa)). Lysine 40 participates in a covalent cross-link: Glycyl lysine isopeptide (Lys-Gly) (interchain with G-Cter in SUMO2). The tract at residues 71-103 (TGGSAPSPATTTAASSSSSSPPPASPHSSSPPR) is disordered. Low complexity predominate over residues 74 to 89 (SAPSPATTTAASSSSS). Positions 165 to 324 (VPPAPTSMVT…CRYCEKVFAL (160 aa)) are interaction with CBFA2T3. The C2H2-type 1; atypical zinc-finger motif lies at 210–232 (FPCPRCGKSFIHPKRLQTHEAQC). The segment at 234 to 255 (RGSNTRGSAGLGPGVSGSGGPA) is disordered. Residues 242 to 255 (AGLGPGVSGSGGPA) are compositionally biased toward gly residues. C2H2-type zinc fingers lie at residues 285-307 (YVCA…SNVH), 313-335 (YPCR…EVWH), and 341-364 (YQCI…RAFH). The residue at position 367 (serine 367) is a Phosphoserine. A disordered region spans residues 404 to 578 (KTYSQGAPEA…QLQAPPPLCQ (175 aa)). A compositionally biased stretch (pro residues) spans 430–446 (SPQPLPPPAPEPGPPPS). Gly residues predominate over residues 467–477 (AAGGGPAGTGG). 2 stretches are compositionally biased toward low complexity: residues 478–488 (SQAASVITYTT) and 507–529 (ATPT…ATAT). Lysine 548 participates in a covalent cross-link: Glycyl lysine isopeptide (Lys-Gly) (interchain with G-Cter in SUMO2). Residues 552-565 (GLSGSGGSPTGTGR) show a composition bias toward gly residues. Lysine 590 is covalently cross-linked (Glycyl lysine isopeptide (Lys-Gly) (interchain with G-Cter in SUMO2)). Residues 591-600 (RRISETDLRP) show a composition bias toward basic and acidic residues. 4 disordered regions span residues 591–700 (RRIS…ERRH), 715–738 (LRKH…SSTR), 759–839 (QRHA…GGGS), and 854–880 (GGSR…GDRM). Positions 604 to 627 (SGEEVEESEEEEEEEEEEDQEEQE) are enriched in acidic residues. The span at 628 to 637 (ESKAGGEDQL) shows a compositional bias: basic and acidic residues. 2 C2H2-type zinc fingers span residues 700–722 (HRCG…QEAH) and 739–761 (FTCP…GQRH). Residues threonine 769 and threonine 771 each carry the phosphothreonine; by HIPK2 modification. A compositionally biased stretch (low complexity) spans 799 to 820 (SSSSGEAGSGSAAAAEASESAS). Threonine 953 carries the phosphothreonine; by HIPK2 modification.

Interacts with HIPK2. Interacts with CBFA2T3. Interacts with ZBTB38. In terms of processing, phosphorylated by HIPK2. This phosphorylation reduces stability and triggers ZBTB4 protein degradation in response to DNA damage. As to expression, expressed in adult and aged myogenic satellite cells.

Its subcellular location is the nucleus. The protein resides in the chromosome. In terms of biological role, transcriptional repressor with bimodal DNA-binding specificity. Represses transcription in a methyl-CpG-dependent manner. Binds with a higher affinity to methylated CpG dinucleotides in the consensus sequence 5'-CGCG-3' but can also bind to the non-methylated consensus sequence 5'-CTGCNA-3' also known as the consensus kaiso binding site (KBS). Can also bind specifically to a single methyl-CpG pair and can bind hemimethylated DNA but with a lower affinity compared to methylated DNA. Plays a role in postnatal myogenesis, may be involved in the regulation of satellite cells self-renewal. In Mus musculus (Mouse), this protein is Zinc finger and BTB domain-containing protein 4 (Zbtb4).